A 358-amino-acid polypeptide reads, in one-letter code: D-alanine--D-alanine ligase B (358 aa).

The region spanning Lys147 to Glu352 is the ATP-grasp domain. Val179 to Glu234 contacts ATP. Residues Asp305, Glu319, and Asn321 each contribute to the Mg(2+) site.

This sequence belongs to the D-alanine--D-alanine ligase family. Mg(2+) is required as a cofactor. The cofactor is Mn(2+).

It is found in the cytoplasm. The catalysed reaction is 2 D-alanine + ATP = D-alanyl-D-alanine + ADP + phosphate + H(+). It participates in cell wall biogenesis; peptidoglycan biosynthesis. Functionally, cell wall formation. The protein is D-alanine--D-alanine ligase B of Clostridium tetani (strain Massachusetts / E88).